A 152-amino-acid chain; its full sequence is Transcriptional regulator MraZ (152 aa).

2 SpoVT-AbrB domains span residues 5–52 (ASAI…PLEA) and 81–124 (AHEC…DEAA).

It belongs to the MraZ family. As to quaternary structure, forms oligomers.

Its subcellular location is the cytoplasm. It localises to the nucleoid. In Shewanella loihica (strain ATCC BAA-1088 / PV-4), this protein is Transcriptional regulator MraZ.